The sequence spans 506 residues: UDP-N-acetylmuramoyl-L-alanyl-D-glutamate--2,6-diaminopimelate ligase (506 aa).

Ser-42 contributes to the UDP-N-acetyl-alpha-D-muramoyl-L-alanyl-D-glutamate binding site. 125-131 is an ATP binding site; the sequence is GTSGKTT. UDP-N-acetyl-alpha-D-muramoyl-L-alanyl-D-glutamate contacts are provided by residues 166–167, Ser-193, and Arg-201; that span reads TT. Residue Lys-233 is modified to N6-carboxylysine. Residues Arg-395, 419 to 422, Gly-475, and Glu-479 contribute to the meso-2,6-diaminopimelate site; that span reads DNPR. Residues 419 to 422 carry the Meso-diaminopimelate recognition motif motif; sequence DNPR.

This sequence belongs to the MurCDEF family. MurE subfamily. Requires Mg(2+) as cofactor. Post-translationally, carboxylation is probably crucial for Mg(2+) binding and, consequently, for the gamma-phosphate positioning of ATP.

The protein resides in the cytoplasm. It carries out the reaction UDP-N-acetyl-alpha-D-muramoyl-L-alanyl-D-glutamate + meso-2,6-diaminopimelate + ATP = UDP-N-acetyl-alpha-D-muramoyl-L-alanyl-gamma-D-glutamyl-meso-2,6-diaminopimelate + ADP + phosphate + H(+). It functions in the pathway cell wall biogenesis; peptidoglycan biosynthesis. Catalyzes the addition of meso-diaminopimelic acid to the nucleotide precursor UDP-N-acetylmuramoyl-L-alanyl-D-glutamate (UMAG) in the biosynthesis of bacterial cell-wall peptidoglycan. This Streptomyces coelicolor (strain ATCC BAA-471 / A3(2) / M145) protein is UDP-N-acetylmuramoyl-L-alanyl-D-glutamate--2,6-diaminopimelate ligase.